A 354-amino-acid polypeptide reads, in one-letter code: UPF0324 membrane protein BL1094 (354 aa).

10 consecutive transmembrane segments (helical) span residues 12 to 33 (IATV…FASW), 43 to 65 (FGAL…SAYV), 86 to 108 (LLRL…TQGI), 112 to 129 (PIAA…YAIA), 138 to 160 (LAIL…LAGS), 175 to 197 (VTMA…IALG), 239 to 256 (LSRV…AIWW), 271 to 293 (VAFP…VPFV), 300 to 321 (LVDF…NVNF), and 331 to 353 (PMLA…AMLF).

Belongs to the UPF0324 family.

Its subcellular location is the cell membrane. The sequence is that of UPF0324 membrane protein BL1094 from Bifidobacterium longum (strain NCC 2705).